A 367-amino-acid polypeptide reads, in one-letter code: UDP-N-acetylglucosamine--N-acetylmuramyl-(pentapeptide) pyrophosphoryl-undecaprenol N-acetylglucosamine transferase (367 aa).

UDP-N-acetyl-alpha-D-glucosamine contacts are provided by residues 15–17, Asn-127, Arg-163, Ser-191, Ile-249, and Gln-294; that span reads TGG.

It belongs to the glycosyltransferase 28 family. MurG subfamily.

The protein resides in the cell inner membrane. The enzyme catalyses di-trans,octa-cis-undecaprenyl diphospho-N-acetyl-alpha-D-muramoyl-L-alanyl-D-glutamyl-meso-2,6-diaminopimeloyl-D-alanyl-D-alanine + UDP-N-acetyl-alpha-D-glucosamine = di-trans,octa-cis-undecaprenyl diphospho-[N-acetyl-alpha-D-glucosaminyl-(1-&gt;4)]-N-acetyl-alpha-D-muramoyl-L-alanyl-D-glutamyl-meso-2,6-diaminopimeloyl-D-alanyl-D-alanine + UDP + H(+). Its pathway is cell wall biogenesis; peptidoglycan biosynthesis. In terms of biological role, cell wall formation. Catalyzes the transfer of a GlcNAc subunit on undecaprenyl-pyrophosphoryl-MurNAc-pentapeptide (lipid intermediate I) to form undecaprenyl-pyrophosphoryl-MurNAc-(pentapeptide)GlcNAc (lipid intermediate II). The polypeptide is UDP-N-acetylglucosamine--N-acetylmuramyl-(pentapeptide) pyrophosphoryl-undecaprenol N-acetylglucosamine transferase (Burkholderia multivorans (strain ATCC 17616 / 249)).